The following is a 101-amino-acid chain: NAD(P)H-quinone oxidoreductase subunit 4L, chloroplastic (101 aa).

3 consecutive transmembrane segments (helical) span residues 2–22 (MLEH…YGLI), 32–52 (MCLE…SDFF), and 61–81 (IFSI…LAIV).

It belongs to the complex I subunit 4L family. In terms of assembly, NDH is composed of at least 16 different subunits, 5 of which are encoded in the nucleus.

Its subcellular location is the plastid. It localises to the chloroplast thylakoid membrane. It carries out the reaction a plastoquinone + NADH + (n+1) H(+)(in) = a plastoquinol + NAD(+) + n H(+)(out). It catalyses the reaction a plastoquinone + NADPH + (n+1) H(+)(in) = a plastoquinol + NADP(+) + n H(+)(out). Its function is as follows. NDH shuttles electrons from NAD(P)H:plastoquinone, via FMN and iron-sulfur (Fe-S) centers, to quinones in the photosynthetic chain and possibly in a chloroplast respiratory chain. The immediate electron acceptor for the enzyme in this species is believed to be plastoquinone. Couples the redox reaction to proton translocation, and thus conserves the redox energy in a proton gradient. The sequence is that of NAD(P)H-quinone oxidoreductase subunit 4L, chloroplastic from Panax ginseng (Korean ginseng).